Here is a 155-residue protein sequence, read N- to C-terminus: Ribosome maturation factor RimP (155 aa).

This sequence belongs to the RimP family.

The protein localises to the cytoplasm. Required for maturation of 30S ribosomal subunits. This chain is Ribosome maturation factor RimP, found in Macrococcus caseolyticus (strain JCSC5402) (Macrococcoides caseolyticum).